A 298-amino-acid chain; its full sequence is Iron-regulated virulence regulatory protein IrgB (298 aa).

The HTH lysR-type domain maps to 1-59 (MQDLSAVKAFHALCQHKSLTAAAKALEQPKSTLSRRLAQLEEDLGQSLLMRQGNRLTLT). A DNA-binding region (H-T-H motif) is located at residues 19–38 (LTAAAKALEQPKSTLSRRLA).

Belongs to the LysR transcriptional regulatory family.

Transcription activation of the irgA gene. In the presence of sufficient iron, transcription of both irgA and irgB is negatively regulated by a fur-like protein. In low iron conditions, negative regulation of transcription is removed, and production of IrgB leads to positive transcriptional activation of irgA. This chain is Iron-regulated virulence regulatory protein IrgB (irgB), found in Vibrio cholerae serotype O1 (strain ATCC 39541 / Classical Ogawa 395 / O395).